The primary structure comprises 315 residues: Cobalamin biosynthesis protein CobD (315 aa).

The next 5 helical transmembrane spans lie at 48–70 (IAGI…LSVQ), 75–94 (LHWI…TIAI), 148–170 (LVDG…AMLY), 208–230 (ITSY…SLYI), and 292–314 (LILL…AAYF).

This sequence belongs to the CobD/CbiB family.

Its subcellular location is the cell membrane. It participates in cofactor biosynthesis; adenosylcobalamin biosynthesis. Its function is as follows. Converts cobyric acid to cobinamide by the addition of aminopropanol on the F carboxylic group. This Leptospira interrogans serogroup Icterohaemorrhagiae serovar copenhageni (strain Fiocruz L1-130) protein is Cobalamin biosynthesis protein CobD.